We begin with the raw amino-acid sequence, 407 residues long: MSRYHTFTAADAVEYARQFGQVADPQALVTADEIGDGNLNLVFKIRDTAGISRVIVKQALPYVRCVGESWPLMLDRARIEAETLLTHSQFCPQHTVKVLHHDAELAVMVQEDLSDHHIWRHELIQGNYYPQAAEQLGEYLAQTLFHTSDFYQSAQAKKAAVSRYTNPELCQITEDLFFTDPYIEHERNNFDPVLLPEVLSLRQDKALKLAVASLKHRFLSQAEALLHGDIHSGSIFVADGRLKTIDAEFGFYGPIGFDIGTALGNLLLNYCGLPGLAGPRDAAAGREQRLNDVQTVWQTFAARFLALSQEKAQDPALATEGYAAQFLQHVWRDAIGYCGSELIRRTIGLAHVADLDSIDDQEMRRACQRHALSLGRALILVAPHVDDVGGVVARIRQSPSSLTPQRC.

Residues Asn40, Lys57, and 111 to 113 (EDL) each bind ATP. Asp229 is a binding site for substrate. 246-248 (DAE) contacts ATP. Arg344 is a binding site for substrate.

Belongs to the methylthioribose kinase family. In terms of assembly, homodimer.

It catalyses the reaction 5-(methylsulfanyl)-D-ribose + ATP = 5-(methylsulfanyl)-alpha-D-ribose 1-phosphate + ADP + H(+). It functions in the pathway amino-acid biosynthesis; L-methionine biosynthesis via salvage pathway; S-methyl-5-thio-alpha-D-ribose 1-phosphate from S-methyl-5'-thioadenosine (hydrolase route): step 2/2. Its function is as follows. Catalyzes the phosphorylation of methylthioribose into methylthioribose-1-phosphate. This Yersinia pestis bv. Antiqua (strain Angola) protein is Methylthioribose kinase.